The following is a 598-amino-acid chain: Proline--tRNA ligase (598 aa).

The protein belongs to the class-II aminoacyl-tRNA synthetase family. ProS type 1 subfamily. Homodimer.

It is found in the cytoplasm. It carries out the reaction tRNA(Pro) + L-proline + ATP = L-prolyl-tRNA(Pro) + AMP + diphosphate. Catalyzes the attachment of proline to tRNA(Pro) in a two-step reaction: proline is first activated by ATP to form Pro-AMP and then transferred to the acceptor end of tRNA(Pro). As ProRS can inadvertently accommodate and process non-cognate amino acids such as alanine and cysteine, to avoid such errors it has two additional distinct editing activities against alanine. One activity is designated as 'pretransfer' editing and involves the tRNA(Pro)-independent hydrolysis of activated Ala-AMP. The other activity is designated 'posttransfer' editing and involves deacylation of mischarged Ala-tRNA(Pro). The misacylated Cys-tRNA(Pro) is not edited by ProRS. This chain is Proline--tRNA ligase, found in Synechococcus sp. (strain CC9311).